Here is a 479-residue protein sequence, read N- to C-terminus: ATP synthase subunit beta (479 aa).

ATP is bound at residue 153-160 (GGAGVGKT).

This sequence belongs to the ATPase alpha/beta chains family. As to quaternary structure, F-type ATPases have 2 components, CF(1) - the catalytic core - and CF(0) - the membrane proton channel. CF(1) has five subunits: alpha(3), beta(3), gamma(1), delta(1), epsilon(1). CF(0) has three main subunits: a(1), b(2) and c(9-12). The alpha and beta chains form an alternating ring which encloses part of the gamma chain. CF(1) is attached to CF(0) by a central stalk formed by the gamma and epsilon chains, while a peripheral stalk is formed by the delta and b chains.

The protein resides in the cell membrane. It catalyses the reaction ATP + H2O + 4 H(+)(in) = ADP + phosphate + 5 H(+)(out). In terms of biological role, produces ATP from ADP in the presence of a proton gradient across the membrane. The catalytic sites are hosted primarily by the beta subunits. The sequence is that of ATP synthase subunit beta from Lactobacillus delbrueckii subsp. bulgaricus (strain ATCC BAA-365 / Lb-18).